The following is a 1109-amino-acid chain: Cation channel sperm-associated auxiliary subunit beta (1109 aa).

At M1 to P1055 the chain is on the extracellular side. C35 and C60 form a disulfide bridge. N66, N90, and N118 each carry an N-linked (GlcNAc...) asparagine glycan. A disulfide bridge connects residues C189 and C302. An N-linked (GlcNAc...) asparagine glycan is attached at N321. C330 and C343 form a disulfide bridge. N672 carries N-linked (GlcNAc...) asparagine glycosylation. Disulfide bonds link C720-C818, C831-C1039, C913-C922, and C924-C939. N-linked (GlcNAc...) asparagine glycosylation is found at N915 and N923. N1017 is a glycosylation site (N-linked (GlcNAc...) asparagine). Residues F1056–F1078 form a helical membrane-spanning segment. Residues V1079–S1109 are Cytoplasmic-facing.

Component of the CatSper complex or CatSpermasome composed of the core pore-forming members CATSPER1, CATSPER2, CATSPER3 and CATSPER4 as well as auxiliary members CATSPERB, CATSPERG2, CATSPERD, CATSPERE, CATSPERZ, C2CD6/CATSPERT, SLCO6C1, TMEM249, TMEM262 and EFCAB9. HSPA1 may be an additional auxiliary complex member. The core complex members CATSPER1, CATSPER2, CATSPER3 and CATSPER4 form a heterotetrameric channel. The auxiliary CATSPERB, CATSPERG2, CATSPERD and CATSPERE subunits form a pavilion-like structure over the pore which stabilizes the complex through interactions with CATSPER4, CATSPER3, CATSPER1 and CATSPER2 respectively. SLCO6C1 interacts with CATSPERE and TMEM262/CATSPERH interacts with CATSPERB, further stabilizing the complex. C2CD6/CATSPERT interacts at least with CATSPERD and is required for targeting the CatSper complex in the flagellar membrane. Testis-specific. Specifically present in the principal piece of sperm tail (at protein level). Specifically expressed in the seminiferous tubules but not in the interstitial cells. Within the tubules, it is expressed in spermatocytes and spermatids, but not in spermatogonia.

The protein resides in the cell projection. It is found in the cilium. Its subcellular location is the flagellum membrane. Functionally, auxiliary component of the CatSper complex, a complex involved in sperm cell hyperactivation. Sperm cell hyperactivation is needed for sperm motility which is essential late in the preparation of sperm for fertilization. This Mus musculus (Mouse) protein is Cation channel sperm-associated auxiliary subunit beta.